The chain runs to 528 residues: Inositol-3-phosphate synthase (528 aa).

The NAD(+) site is built by glycine 66, glycine 67, asparagine 68, asparagine 69, aspartate 140, glutamine 187, arginine 190, threonine 228, alanine 229, asparagine 230, threonine 231, glycine 279, aspartate 304, serine 307, asparagine 338, asparagine 339, aspartate 340, lysine 353, glycine 392, aspartate 393, aspartate 421, and serine 422.

It belongs to the myo-inositol 1-phosphate synthase family. NAD(+) serves as cofactor.

It is found in the cytoplasm. The protein resides in the cytosol. It catalyses the reaction D-glucose 6-phosphate = 1D-myo-inositol 3-phosphate. The protein operates within polyol metabolism; myo-inositol biosynthesis; myo-inositol from D-glucose 6-phosphate: step 1/2. With respect to regulation, activated by ammonium ions. Key enzyme in myo-inositol biosynthesis pathway that catalyzes the conversion of glucose 6-phosphate to 1-myo-inositol 1-phosphate in a NAD-dependent manner. Rate-limiting enzyme in the synthesis of all inositol-containing compounds. De novo-synthesized myo-inositol is essential for incorporation into GPI (glycosylphosphatidylinositol) glycolipids in the bloodstream form. In Trypanosoma brucei brucei, this protein is Inositol-3-phosphate synthase.